The primary structure comprises 380 residues: Chaperone protein DnaJ (380 aa).

The J domain occupies 6-71 (DYYAILEVSR…QKRAAYDQYG (66 aa)). A CR-type zinc finger spans residues 136-215 (GVKKDVRVIT…CHGEGTVEKE (80 aa)). Zn(2+) is bound by residues cysteine 149, cysteine 152, cysteine 167, cysteine 170, cysteine 189, cysteine 192, cysteine 203, and cysteine 206. CXXCXGXG motif repeat units follow at residues 149 to 156 (CEACHGTG), 167 to 174 (CPSCHGAG), 189 to 196 (CPTCHGAG), and 203 to 210 (CKVCHGEG).

This sequence belongs to the DnaJ family. As to quaternary structure, homodimer. Requires Zn(2+) as cofactor.

The protein localises to the cytoplasm. Functionally, participates actively in the response to hyperosmotic and heat shock by preventing the aggregation of stress-denatured proteins and by disaggregating proteins, also in an autonomous, DnaK-independent fashion. Unfolded proteins bind initially to DnaJ; upon interaction with the DnaJ-bound protein, DnaK hydrolyzes its bound ATP, resulting in the formation of a stable complex. GrpE releases ADP from DnaK; ATP binding to DnaK triggers the release of the substrate protein, thus completing the reaction cycle. Several rounds of ATP-dependent interactions between DnaJ, DnaK and GrpE are required for fully efficient folding. Also involved, together with DnaK and GrpE, in the DNA replication of plasmids through activation of initiation proteins. The protein is Chaperone protein DnaJ of Acetobacter pasteurianus (strain NBRC 105184 / IFO 3283-01).